The following is a 380-amino-acid chain: Cytochrome b (380 aa).

4 consecutive transmembrane segments (helical) span residues 34–54, 78–99, 114–134, and 179–199; these read FGSLLGLCLIAQIATGLFLAM, WLLRNLHANGASFFFICIYFHI, WNIGVILLFLLMATAFVGYVL, and FFTFHFILPFIITAVSLIHLL. Heme b-binding residues include His-84 and His-98. Heme b contacts are provided by His-183 and His-197. His-202 contacts a ubiquinone. The next 4 membrane-spanning stretches (helical) occupy residues 227 to 247, 289 to 309, 321 to 341, and 348 to 368; these read YKDLLGFVIMLGALASLSTFA, LGGVLAVVLSIMVLFLMPIIH, IAKTFFWALIANTAILTWIGG, and FITIGQIASGLYFLIFVLLIP.

This sequence belongs to the cytochrome b family. In terms of assembly, the cytochrome bc1 complex contains 3 respiratory subunits (MT-CYB, CYC1 and UQCRFS1), 2 core proteins (UQCRC1 and UQCRC2) and probably 6 low-molecular weight proteins. Requires heme b as cofactor.

Its subcellular location is the mitochondrion inner membrane. Component of the ubiquinol-cytochrome c reductase complex (complex III or cytochrome b-c1 complex) that is part of the mitochondrial respiratory chain. The b-c1 complex mediates electron transfer from ubiquinol to cytochrome c. Contributes to the generation of a proton gradient across the mitochondrial membrane that is then used for ATP synthesis. This Rana amurensis (Siberian wood frog) protein is Cytochrome b (mt-cyb).